We begin with the raw amino-acid sequence, 443 residues long: ATP-dependent protease ATPase subunit HslU (443 aa).

Residues I18, 60 to 65 (GVGKTE), D256, E321, and R393 contribute to the ATP site.

It belongs to the ClpX chaperone family. HslU subfamily. A double ring-shaped homohexamer of HslV is capped on each side by a ring-shaped HslU homohexamer. The assembly of the HslU/HslV complex is dependent on binding of ATP.

The protein resides in the cytoplasm. Its function is as follows. ATPase subunit of a proteasome-like degradation complex; this subunit has chaperone activity. The binding of ATP and its subsequent hydrolysis by HslU are essential for unfolding of protein substrates subsequently hydrolyzed by HslV. HslU recognizes the N-terminal part of its protein substrates and unfolds these before they are guided to HslV for hydrolysis. This is ATP-dependent protease ATPase subunit HslU from Buchnera aphidicola subsp. Schizaphis graminum (strain Sg).